The sequence spans 110 residues: Hydrogenase maturation factor HypA (110 aa).

Position 2 (H2) interacts with Ni(2+). C73, C76, C87, and C89 together coordinate Zn(2+).

The protein belongs to the HypA/HybF family.

In terms of biological role, involved in the maturation of [NiFe] hydrogenases. Required for nickel insertion into the metal center of the hydrogenase. The polypeptide is Hydrogenase maturation factor HypA (Archaeoglobus fulgidus (strain ATCC 49558 / DSM 4304 / JCM 9628 / NBRC 100126 / VC-16)).